A 281-amino-acid chain; its full sequence is MNQNQLISVEDIVFRYRKDAERRALDGVSLQVYEGEWLAIVGHNGSGKSTLARALNGLILPESGDIEVAGIQLTEESVWEVRKKIGMVFQNPDNQFVGTTVRDDVAFGLENNGVPREEMIERVDWAVKQVNMQDFLDQEPHHLSGGQKQRVAIAGVIAARPDIIILDEATSMLDPIGREEVLETVRHLKEQGMATVISITHDLNEAAKADRIIVMNGGKKYAEGPPEEIFKLNKELVRIGLDLPFSFQLSQLLRENGLALEENHLTQEGLVKELWTLQSKM.

The ABC transporter domain maps to 7-242 (ISVEDIVFRY…NKELVRIGLD (236 aa)). ATP is bound at residue 42–49 (GHNGSGKS). The Proton acceptor role is filled by E168.

The protein belongs to the ABC transporter superfamily. Energy-coupling factor EcfA family. As to quaternary structure, forms a stable energy-coupling factor (ECF) transporter complex composed of 2 membrane-embedded substrate-binding proteins (S component), 2 ATP-binding proteins (A component) and 2 transmembrane proteins (T component).

Its subcellular location is the cell membrane. In terms of biological role, ATP-binding (A) component of a common energy-coupling factor (ECF) ABC-transporter complex. Unlike classic ABC transporters this ECF transporter provides the energy necessary to transport a number of different substrates. This Bacillus subtilis (strain 168) protein is Energy-coupling factor transporter ATP-binding protein EcfA1.